Reading from the N-terminus, the 408-residue chain is Repulsive guidance molecule B homolog drag-1 (408 aa).

Positions 1-22 (MSIVYLVSITFIFSVFKPITSC) are cleaved as a signal peptide. The Extracellular portion of the chain corresponds to 23 to 387 (RVEECAAWFQ…SEIFKKCIPS (365 aa)). Residues Asn60, Asn134, Asn183, and Asn376 are each glycosylated (N-linked (GlcNAc...) asparagine). Residues 388 to 408 (KSIRFYPFLAIFFFALLSLLC) traverse the membrane as a helical segment.

Belongs to the repulsive guidance molecule (RGM) family. Interacts with unc-40 (via FN6 domain), dbl-1 and sma-6. As to expression, expressed in pharyngeal, hypodermal and intestinal cells.

It localises to the cell membrane. In terms of biological role, probably in association with the cell surface receptor unc-40, positively modulates the BMP-like Sma/Mab signaling pathway through interaction with both the ligand dbl-1 and its type I receptor sma-6. Regulates body size and this may be through modulation of the Sma/Mab signaling pathway. In Caenorhabditis elegans, this protein is Repulsive guidance molecule B homolog drag-1.